Here is a 513-residue protein sequence, read N- to C-terminus: Alpha-1B-glycoprotein (513 aa).

An N-terminal signal peptide occupies residues 1-20; sequence MSLLTTVLLLWGFTLGPGNA. Ig-like V-type domains are found at residues 22–126, 127–219, 220–312, 313–415, and 416–513; these read WLDS…VTGK, EPLP…MSAT, QLPP…PVEL, MWSD…LRIN, and GPAP…VEGS. Asn-44, Asn-89, and Asn-192 each carry an N-linked (GlcNAc...) asparagine glycan. Disulfide bonds link Cys-49-Cys-96, Cys-153-Cys-195, Cys-245-Cys-292, Cys-343-Cys-392, and Cys-441-Cys-488. Asn-369, Asn-381, Asn-389, and Asn-485 each carry an N-linked (GlcNAc...) asparagine glycan.

Interacts with CRISP3. Isoform 1 is expressed in normal liver. Isoform 2 is expressed in the regenerating liver after partial hepatectomy and at very low levels in the normal lung, brain and testis.

Its subcellular location is the secreted. In Rattus norvegicus (Rat), this protein is Alpha-1B-glycoprotein.